The following is an 86-amino-acid chain: Large ribosomal subunit protein bL35m (86 aa).

A mitochondrion-targeting transit peptide spans M1–K18. The segment at R45–E69 is disordered.

Belongs to the bacterial ribosomal protein bL35 family. As to quaternary structure, component of the mitochondrial large ribosomal subunit (mt-LSU). Mature yeast 74S mitochondrial ribosomes consist of a small (37S) and a large (54S) subunit. The 37S small subunit contains a 15S ribosomal RNA (15S mt-rRNA) and at least 32 different proteins. The 54S large subunit contains a 21S rRNA (21S mt-rRNA) and at least 45 different proteins.

The protein resides in the mitochondrion. In terms of biological role, component of the mitochondrial ribosome (mitoribosome), a dedicated translation machinery responsible for the synthesis of mitochondrial genome-encoded proteins, including at least some of the essential transmembrane subunits of the mitochondrial respiratory chain. The mitoribosomes are attached to the mitochondrial inner membrane and translation products are cotranslationally integrated into the membrane. The polypeptide is Large ribosomal subunit protein bL35m (new15) (Schizosaccharomyces pombe (strain 972 / ATCC 24843) (Fission yeast)).